Consider the following 449-residue polypeptide: UDP-N-acetylmuramoylalanine--D-glutamate ligase (449 aa).

118–124 (GTNGKTT) provides a ligand contact to ATP.

The protein belongs to the MurCDEF family.

Its subcellular location is the cytoplasm. The catalysed reaction is UDP-N-acetyl-alpha-D-muramoyl-L-alanine + D-glutamate + ATP = UDP-N-acetyl-alpha-D-muramoyl-L-alanyl-D-glutamate + ADP + phosphate + H(+). The protein operates within cell wall biogenesis; peptidoglycan biosynthesis. Cell wall formation. Catalyzes the addition of glutamate to the nucleotide precursor UDP-N-acetylmuramoyl-L-alanine (UMA). The sequence is that of UDP-N-acetylmuramoylalanine--D-glutamate ligase from Staphylococcus aureus (strain Mu3 / ATCC 700698).